The sequence spans 454 residues: Glutamyl-tRNA reductase (454 aa).

Residues 49 to 52, serine 109, 114 to 116, and glutamine 120 contribute to the substrate site; these read TCNR and ETQ. Catalysis depends on cysteine 50, which acts as the Nucleophile. 189-194 contacts NADP(+); it reads GAGKMS. The segment covering 432 to 442 has biased composition (basic and acidic residues); it reads DHAEQSWKEGQ. Positions 432–454 are disordered; the sequence is DHAEQSWKEGQRPSLNQGMALRT.

It belongs to the glutamyl-tRNA reductase family. As to quaternary structure, homodimer.

The enzyme catalyses (S)-4-amino-5-oxopentanoate + tRNA(Glu) + NADP(+) = L-glutamyl-tRNA(Glu) + NADPH + H(+). It participates in porphyrin-containing compound metabolism; protoporphyrin-IX biosynthesis; 5-aminolevulinate from L-glutamyl-tRNA(Glu): step 1/2. Its function is as follows. Catalyzes the NADPH-dependent reduction of glutamyl-tRNA(Glu) to glutamate 1-semialdehyde (GSA). The protein is Glutamyl-tRNA reductase of Shouchella clausii (strain KSM-K16) (Alkalihalobacillus clausii).